The chain runs to 278 residues: Large ribosomal subunit protein uL2 (278 aa).

2 disordered regions span residues 26–57 (RSTPEKSLVRPLHSKGGRNNAGRVTVRHQGGG) and 225–278 (VMNP…NKKR). Residues 258–278 (RSPKKASNKYIVRRRKTNKKR) show a composition bias toward basic residues.

This sequence belongs to the universal ribosomal protein uL2 family. As to quaternary structure, part of the 50S ribosomal subunit. Forms a bridge to the 30S subunit in the 70S ribosome.

Functionally, one of the primary rRNA binding proteins. Required for association of the 30S and 50S subunits to form the 70S ribosome, for tRNA binding and peptide bond formation. It has been suggested to have peptidyltransferase activity; this is somewhat controversial. Makes several contacts with the 16S rRNA in the 70S ribosome. The chain is Large ribosomal subunit protein uL2 from Streptomyces coelicolor (strain ATCC BAA-471 / A3(2) / M145).